The sequence spans 332 residues: tRNA-dihydrouridine synthase B (332 aa).

Residues 16 to 18 (PMA) and Q70 each bind FMN. Residue C100 is the Proton donor of the active site. Residues K139, 200–202 (NGD), and 224–225 (GR) each bind FMN.

This sequence belongs to the Dus family. DusB subfamily. The cofactor is FMN.

It carries out the reaction a 5,6-dihydrouridine in tRNA + NAD(+) = a uridine in tRNA + NADH + H(+). The enzyme catalyses a 5,6-dihydrouridine in tRNA + NADP(+) = a uridine in tRNA + NADPH + H(+). Catalyzes the synthesis of 5,6-dihydrouridine (D), a modified base found in the D-loop of most tRNAs, via the reduction of the C5-C6 double bond in target uridines. The chain is tRNA-dihydrouridine synthase B from Xanthomonas campestris pv. campestris (strain ATCC 33913 / DSM 3586 / NCPPB 528 / LMG 568 / P 25).